A 347-amino-acid polypeptide reads, in one-letter code: NADH-ubiquinone oxidoreductase chain 2 (347 aa).

The next 11 helical transmembrane spans lie at 3-23 (PVVL…VMTT), 25-45 (HWLL…PILM), 59-79 (YFLT…INLI), 96-116 (IIMT…FWVP), 122-142 (IQLS…MSIL), 149-169 (INLH…GWGG), 178-198 (IMAY…IYNP), 200-220 (MALL…MTFM), 237-257 (MPLL…LPPL), 274-294 (NSII…FFYM), and 325-345 (LLSP…MLAL).

This sequence belongs to the complex I subunit 2 family. Core subunit of respiratory chain NADH dehydrogenase (Complex I) which is composed of 45 different subunits. Interacts with TMEM242.

It is found in the mitochondrion inner membrane. The catalysed reaction is a ubiquinone + NADH + 5 H(+)(in) = a ubiquinol + NAD(+) + 4 H(+)(out). Core subunit of the mitochondrial membrane respiratory chain NADH dehydrogenase (Complex I) which catalyzes electron transfer from NADH through the respiratory chain, using ubiquinone as an electron acceptor. Essential for the catalytic activity and assembly of complex I. The polypeptide is NADH-ubiquinone oxidoreductase chain 2 (Paranyctimene raptor (Unstriped tube-nosed fruit bat)).